Reading from the N-terminus, the 292-residue chain is Coiled-coil domain-containing protein 137 (292 aa).

Over residues 1-16 (MAGLRRGAAAVAPAGT) the composition is skewed to low complexity. 4 disordered regions span residues 1-94 (MAGL…AQAA), 139-183 (FLSK…EKAA), 205-243 (PELT…LTTS), and 263-292 (ALKR…EMQL). Composition is skewed to basic and acidic residues over residues 57-78 (KNQD…RQEM), 155-164 (PKKEKSERKK), and 173-183 (KARQRREEKAA). Residues 156–194 (KKEKSERKKAFQKRRLDKARQRREEKAAERLEQELLQDT) adopt a coiled-coil conformation. Residues 222–232 (KKSLMLKKLLS) show a composition bias toward low complexity. Serine 232 carries the phosphoserine modification. Positions 234-243 (GSVSQPLTTS) are enriched in polar residues. Residues 247-276 (QRIVAEERERAVNAYRALKRLQQQRQETQS) are a coiled coil.

The protein localises to the chromosome. In Bos taurus (Bovine), this protein is Coiled-coil domain-containing protein 137 (CCDC137).